Consider the following 565-residue polypeptide: Sulfite reductase [NADPH] hemoprotein beta-component (565 aa).

[4Fe-4S] cluster contacts are provided by cysteine 429, cysteine 435, cysteine 474, and cysteine 478. Cysteine 478 contributes to the siroheme binding site.

This sequence belongs to the nitrite and sulfite reductase 4Fe-4S domain family. As to quaternary structure, alpha(8)-beta(8). The alpha component is a flavoprotein, the beta component is a hemoprotein. Requires siroheme as cofactor. [4Fe-4S] cluster is required as a cofactor.

It catalyses the reaction hydrogen sulfide + 3 NADP(+) + 3 H2O = sulfite + 3 NADPH + 4 H(+). It participates in sulfur metabolism; hydrogen sulfide biosynthesis; hydrogen sulfide from sulfite (NADPH route): step 1/1. In terms of biological role, component of the sulfite reductase complex that catalyzes the 6-electron reduction of sulfite to sulfide. This is one of several activities required for the biosynthesis of L-cysteine from sulfate. The polypeptide is Sulfite reductase [NADPH] hemoprotein beta-component (Shewanella halifaxensis (strain HAW-EB4)).